The primary structure comprises 478 residues: MSRFSSALQLTDLDDFITPSQECIKPVKIETSKSKTGAKITIQEDGSYVQESSSGIQKLEKVEITLADCLACSGCITSAEGVLISQQSQEELLRVMNANNLAKLNNQRDEIKFVVFTVSQQPILSLARKYNLTPEDTFEHIAGYFKKLGADMVVDTKIADDLALIECRNEFIERYNTNRKLLPMLASSCPGWVCYAEKTHGNFILPYIATTRSPQQIMGVLVKQYLAKQLQTTGDRIYHVTVMPCYDKKLEASREDFFSEVENSRDVDCVITSIEIEQMLNSLDLPSLQLVERCAIDWPWPTVRPSAFVWGHESSGSGGYAEYIFKYAARKLFNVQLDTVAFKPLRNNDMREAVLEQNGQVLMRFAIANGFRNIQNMVQKLKRGKSTYDYVEIMACPSGCLNGGAQIRPEEGRAARELTAELECMYRSLPQSTPENDCVQTMYATFFDSEGDLNKRQSLLHTSYHQIEKINSALNIKW.

Positions 23, 69, 72, 75, 189, 245, 396, and 400 each coordinate [4Fe-4S] cluster.

Belongs to the NARF family.

In terms of biological role, component of the cytosolic iron-sulfur (Fe/S) protein assembly machinery. Required for maturation of extramitochondrial Fe/S proteins. In Anopheles gambiae (African malaria mosquito), this protein is Probable cytosolic Fe-S cluster assembly factor AGAP009023.